Here is a 511-residue protein sequence, read N- to C-terminus: Putative thymidine phosphorylase (511 aa).

This sequence belongs to the thymidine/pyrimidine-nucleoside phosphorylase family. Type 2 subfamily.

The enzyme catalyses thymidine + phosphate = 2-deoxy-alpha-D-ribose 1-phosphate + thymine. This chain is Putative thymidine phosphorylase, found in Bradyrhizobium sp. (strain BTAi1 / ATCC BAA-1182).